The primary structure comprises 177 residues: Large ribosomal subunit protein uL6 (177 aa).

Belongs to the universal ribosomal protein uL6 family. In terms of assembly, part of the 50S ribosomal subunit.

Its function is as follows. This protein binds to the 23S rRNA, and is important in its secondary structure. It is located near the subunit interface in the base of the L7/L12 stalk, and near the tRNA binding site of the peptidyltransferase center. The sequence is that of Large ribosomal subunit protein uL6 from Acinetobacter baumannii (strain AB307-0294).